Consider the following 225-residue polypeptide: Tryptophan synthase beta chain (225 aa).

It belongs to the TrpB family. As to quaternary structure, tetramer of two alpha and two beta chains. The cofactor is pyridoxal 5'-phosphate.

The catalysed reaction is (1S,2R)-1-C-(indol-3-yl)glycerol 3-phosphate + L-serine = D-glyceraldehyde 3-phosphate + L-tryptophan + H2O. It participates in amino-acid biosynthesis; L-tryptophan biosynthesis; L-tryptophan from chorismate: step 5/5. In terms of biological role, the beta subunit is responsible for the synthesis of L-tryptophan from indole and L-serine. The sequence is that of Tryptophan synthase beta chain (trpB) from Buchnera aphidicola subsp. Rhopalosiphum padi.